The primary structure comprises 266 residues: Orcokinin peptides type B (266 aa).

The first 20 residues, 1 to 20 (MTAQMFTIALLLSLSAIAAA), serve as a signal peptide directing secretion. 3 propeptides span residues 21-46 (GTIK…GAPV), 240-246 (DYDVFPD), and 264-266 (NVE).

This sequence belongs to the orcokinin family.

It localises to the secreted. Myotropic peptides that enhance both the frequency and amplitude of spontaneous hindgut contractions. This chain is Orcokinin peptides type B, found in Procambarus clarkii (Red swamp crayfish).